The following is a 461-amino-acid chain: Type IV secretion system protein PtlD homolog (461 aa).

Positions 1 to 24 are cleaved as a signal peptide; sequence MAGLSRILLSCTLACLLAGQAAQA. 5 helical membrane passes run 118–138, 232–252, 253–273, 294–314, and 333–353; these read LQPL…YALL, WLLC…LAAS, LLIV…LFLV, ALVF…VLAG, and MLAA…VPLA. Over residues 376–411 the composition is skewed to low complexity; sequence AHRQAAARQYAPRPAAAAAAAGPHQAGTYAASATPA. A disordered region spans residues 376 to 461; that stretch reads AHRQAAARQY…RVLPRKPNLP (86 aa). Basic and acidic residues predominate over residues 439–453; it reads VRRDDRPAPAPDRRV.

It localises to the cell membrane. This chain is Type IV secretion system protein PtlD homolog (ptlD), found in Bordetella bronchiseptica (strain ATCC BAA-588 / NCTC 13252 / RB50) (Alcaligenes bronchisepticus).